We begin with the raw amino-acid sequence, 206 residues long: Ribosomal RNA small subunit methyltransferase G (206 aa).

S-adenosyl-L-methionine is bound by residues glycine 73, leucine 78, 124-125, and arginine 139; that span reads VE.

It belongs to the methyltransferase superfamily. RNA methyltransferase RsmG family.

The protein resides in the cytoplasm. It catalyses the reaction guanosine(527) in 16S rRNA + S-adenosyl-L-methionine = N(7)-methylguanosine(527) in 16S rRNA + S-adenosyl-L-homocysteine. Its function is as follows. Specifically methylates the N7 position of guanine in position 527 of 16S rRNA. This chain is Ribosomal RNA small subunit methyltransferase G, found in Yersinia pseudotuberculosis serotype O:3 (strain YPIII).